The chain runs to 398 residues: tRNA-specific 2-thiouridylase MnmA (398 aa).

ATP contacts are provided by residues 20 to 27 (AMSGGVDS) and leucine 46. The active-site Nucleophile is cysteine 114. Cysteine 114 and cysteine 210 are joined by a disulfide. Glycine 138 is a binding site for ATP. The interaction with tRNA stretch occupies residues 160–162 (RDQ). Cysteine 210 serves as the catalytic Cysteine persulfide intermediate.

It belongs to the MnmA/TRMU family.

It is found in the cytoplasm. The enzyme catalyses S-sulfanyl-L-cysteinyl-[protein] + uridine(34) in tRNA + AH2 + ATP = 2-thiouridine(34) in tRNA + L-cysteinyl-[protein] + A + AMP + diphosphate + H(+). Functionally, catalyzes the 2-thiolation of uridine at the wobble position (U34) of tRNA, leading to the formation of s(2)U34. This chain is tRNA-specific 2-thiouridylase MnmA, found in Brucella abortus (strain S19).